A 416-amino-acid chain; its full sequence is L-cysteine:1D-myo-inositol 2-amino-2-deoxy-alpha-D-glucopyranoside ligase (416 aa).

Cys-45 serves as a coordination point for Zn(2+). L-cysteinyl-5'-AMP is bound by residues 45–48 (CGIT), Thr-60, and 83–85 (NVT). The 'HIGH' region motif lies at 47–57 (ITPYDSTHLGH). The 'ERGGDP' region motif lies at 191–196 (ERGGDP). Trp-232 contributes to the L-cysteinyl-5'-AMP binding site. Position 236 (Cys-236) interacts with Zn(2+). L-cysteinyl-5'-AMP is bound at residue 254–256 (GSD). His-261 serves as a coordination point for Zn(2+). Val-286 lines the L-cysteinyl-5'-AMP pocket. The short motif at 292–296 (KMSKS) is the 'KMSKS' region element.

The protein belongs to the class-I aminoacyl-tRNA synthetase family. MshC subfamily. As to quaternary structure, monomer. The cofactor is Zn(2+).

The enzyme catalyses 1D-myo-inositol 2-amino-2-deoxy-alpha-D-glucopyranoside + L-cysteine + ATP = 1D-myo-inositol 2-(L-cysteinylamino)-2-deoxy-alpha-D-glucopyranoside + AMP + diphosphate + H(+). Catalyzes the ATP-dependent condensation of GlcN-Ins and L-cysteine to form L-Cys-GlcN-Ins. This is L-cysteine:1D-myo-inositol 2-amino-2-deoxy-alpha-D-glucopyranoside ligase from Brachybacterium faecium (strain ATCC 43885 / DSM 4810 / JCM 11609 / LMG 19847 / NBRC 14762 / NCIMB 9860 / 6-10).